The chain runs to 224 residues: Ribosomal RNA large subunit methyltransferase E (224 aa).

Residues Gly60, Trp62, Asp93, Asp109, and Asp137 each coordinate S-adenosyl-L-methionine. Lys177 acts as the Proton acceptor in catalysis.

This sequence belongs to the class I-like SAM-binding methyltransferase superfamily. RNA methyltransferase RlmE family.

Its subcellular location is the cytoplasm. The catalysed reaction is uridine(2552) in 23S rRNA + S-adenosyl-L-methionine = 2'-O-methyluridine(2552) in 23S rRNA + S-adenosyl-L-homocysteine + H(+). Specifically methylates the uridine in position 2552 of 23S rRNA at the 2'-O position of the ribose in the fully assembled 50S ribosomal subunit. This Polynucleobacter asymbioticus (strain DSM 18221 / CIP 109841 / QLW-P1DMWA-1) (Polynucleobacter necessarius subsp. asymbioticus) protein is Ribosomal RNA large subunit methyltransferase E.